The primary structure comprises 344 residues: Heat-inducible transcription repressor HrcA (344 aa).

Belongs to the HrcA family.

In terms of biological role, negative regulator of class I heat shock genes (grpE-dnaK-dnaJ and groELS operons). Prevents heat-shock induction of these operons. This chain is Heat-inducible transcription repressor HrcA, found in Geobacillus sp. (strain WCH70).